The sequence spans 369 residues: Cytokine receptor common subunit gamma (369 aa).

An N-terminal signal peptide occupies residues 1 to 22 (MLKPSLPFTSLLFLQLPLLGVG). Residues 23–262 (LNTTILTPNG…ENPFLFALEA (240 aa)) are Extracellular-facing. Residues N24, N71, N75, and N84 are each glycosylated (N-linked (GlcNAc...) asparagine). A disulfide bridge connects residues C62 and C72. C102 and C115 are joined by a disulfide. The region spanning 156–253 (APENLTLHKL…IHWGSNTSKE (98 aa)) is the Fibronectin type-III domain. N159 carries N-linked (GlcNAc...) asparagine glycosylation. C182 and C231 are joined by a disulfide. The WSXWS motif motif lies at 237–241 (WSEWS). A glycan (N-linked (GlcNAc...) asparagine) is linked at N249. Residues 263–283 (VVISVGSMGLIISLLCVYFWL) traverse the membrane as a helical segment. The Cytoplasmic portion of the chain corresponds to 284–369 (ERTMPRIPTL…PPCYTLKPET (86 aa)). A Box 1 motif motif is present at residues 286–294 (TMPRIPTLK). T292 is subject to Phosphothreonine.

It belongs to the type I cytokine receptor family. Type 5 subfamily. In terms of assembly, the gamma subunit is common to the IL2, IL4, IL7, IL15, IL21 and probably also the IL13 receptors. Interacts with SHB upon interleukin stimulation. Interacts with IL9. (Microbial infection) Interacts with HTLV-1 accessory protein p12I.

The protein localises to the cell membrane. It localises to the cell surface. In terms of biological role, common subunit for the receptors for a variety of interleukins. Probably in association with IL15RA, involved in the stimulation of neutrophil phagocytosis by IL15. This Homo sapiens (Human) protein is Cytokine receptor common subunit gamma (IL2RG).